We begin with the raw amino-acid sequence, 250 residues long: Flavin-dependent thymidylate synthase (250 aa).

Residues Leu-7–Glu-233 form the ThyX domain. DUMP is bound by residues Glu-92–Arg-95, Gln-103–Arg-107, and Arg-172. FAD contacts are provided by residues Arg-95–Arg-97 and Gln-103. The short motif at Arg-95–Ser-105 is the ThyX motif element. Residues Asn-188 to Arg-190 and His-194 contribute to the FAD site. Arg-199 contributes to the dUMP binding site. Arg-199 functions as the Involved in ionization of N3 of dUMP, leading to its activation in the catalytic mechanism.

This sequence belongs to the thymidylate synthase ThyX family. Homotetramer. It depends on FAD as a cofactor.

It carries out the reaction dUMP + (6R)-5,10-methylene-5,6,7,8-tetrahydrofolate + NADPH + H(+) = dTMP + (6S)-5,6,7,8-tetrahydrofolate + NADP(+). It functions in the pathway pyrimidine metabolism; dTTP biosynthesis. Its function is as follows. Catalyzes the reductive methylation of 2'-deoxyuridine-5'-monophosphate (dUMP) to 2'-deoxythymidine-5'-monophosphate (dTMP) while utilizing 5,10-methylenetetrahydrofolate (mTHF) as the methyl donor, and NADPH and FADH(2) as the reductant. The protein is Flavin-dependent thymidylate synthase of Corynebacterium efficiens (strain DSM 44549 / YS-314 / AJ 12310 / JCM 11189 / NBRC 100395).